We begin with the raw amino-acid sequence, 1188 residues long: DNA-directed RNA polymerase subunit beta (1188 aa).

This sequence belongs to the RNA polymerase beta chain family. The RNAP catalytic core consists of 2 alpha, 1 beta, 1 beta' and 1 omega subunit. When a sigma factor is associated with the core the holoenzyme is formed, which can initiate transcription.

The enzyme catalyses RNA(n) + a ribonucleoside 5'-triphosphate = RNA(n+1) + diphosphate. In terms of biological role, DNA-dependent RNA polymerase catalyzes the transcription of DNA into RNA using the four ribonucleoside triphosphates as substrates. In Streptococcus sanguinis (strain SK36), this protein is DNA-directed RNA polymerase subunit beta.